Here is a 527-residue protein sequence, read N- to C-terminus: UDP-glucuronosyltransferase 2A1 (527 aa).

The signal sequence occupies residues 1-20 (MLKNILLWSLQLSLLGMSLG). Topologically, residues 21-490 (GNVLIWPMEG…LSWFQYHSLD (470 aa)) are extracellular. Asn-49 carries N-linked (GlcNAc...) asparagine glycosylation. Lys-134 carries the post-translational modification N6-succinyllysine. Asn-313 is a glycosylation site (N-linked (GlcNAc...) asparagine). Residues 491–507 (VIGFLLACMASAILLVI) traverse the membrane as a helical segment. At 508 to 527 (KCCLFVFQKIGKTXKKNKRD) the chain is on the cytoplasmic side.

It belongs to the UDP-glycosyltransferase family. As to expression, olfactory epithelium. Mainly found in the sustentacular cells and to a lesser extent in Bowman's gland cells. Also expressed in the olfactory sensory neuron nuclei. Neuronal localization within the olfactory bulb is mainly found in the deeper granular cells.

Its subcellular location is the membrane. The enzyme catalyses glucuronate acceptor + UDP-alpha-D-glucuronate = acceptor beta-D-glucuronoside + UDP + H(+). The catalysed reaction is 16beta,17beta-estriol + UDP-alpha-D-glucuronate = 16beta,17beta-estriol 16-O-(beta-D-glucuronate) + UDP + H(+). It catalyses the reaction 16alpha,17alpha-estriol + UDP-alpha-D-glucuronate = 16alpha,17alpha-estriol 16-O-(beta-D-glucuronate) + UDP + H(+). It carries out the reaction 17alpha-estradiol + UDP-alpha-D-glucuronate = 17alpha-estradiol 17-O-(beta-D-glucuronate) + UDP + H(+). The enzyme catalyses 17alpha-estradiol + UDP-alpha-D-glucuronate = 17alpha-estradiol 3-O-(beta-D-glucuronate) + UDP + H(+). The catalysed reaction is 17beta-estradiol + UDP-alpha-D-glucuronate = 17beta-estradiol 3-O-(beta-D-glucuronate) + UDP + H(+). It catalyses the reaction 17beta-estradiol + UDP-alpha-D-glucuronate = 17beta-estradiol 17-O-(beta-D-glucuronate) + UDP + H(+). It carries out the reaction testosterone + UDP-alpha-D-glucuronate = testosterone 17-O-(beta-D-glucuronate) + UDP + H(+). The enzyme catalyses epitestosterone + UDP-alpha-D-glucuronate = epitestosterone 17-O-(beta-D-glucuronate) + UDP + H(+). The catalysed reaction is lithocholate + UDP-alpha-D-glucuronate = lithocholoyl-3-O-(beta-D-glucuronate) + UDP + H(+). It catalyses the reaction lithocholate + UDP-alpha-D-glucuronate = lithocholoyl-24-O-(beta-D-glucuronate) + UDP. It carries out the reaction deoxycholate + UDP-alpha-D-glucuronate = deoxycholoyl-24-O-(beta-D-glucuronate) + UDP. The enzyme catalyses hyodeoxycholate + UDP-alpha-D-glucuronate = hyodeoxycholate 6-O-(beta-D-glucuronate) + UDP + H(+). The catalysed reaction is hyocholate + UDP-alpha-D-glucuronate = hyocholoyl-24-O-(beta-D-glucuronate) + UDP. Its function is as follows. UDP-glucuronosyltransferase (UGT) that catalyzes phase II biotransformation reactions in which lipophilic substrates are conjugated with glucuronic acid to increase the metabolite's water solubility, thereby facilitating excretion into either the urine or bile. Essential for the elimination and detoxification of drugs, xenobiotics and endogenous compounds. Catalyzes the glucuronidation of endogenous steroid hormones such as androgens (testosterones) and estrogens (estradiol and estriol). Contributes to bile acid (BA) detoxification by catalyzing the glucuronidation of BA substrates, which are natural detergents for dietary lipids absorption. Shows a high affinity to aliphatic odorants such as citronellol as well as olfactory tissue specificity, and therefore may be involved in olfaction. This is UDP-glucuronosyltransferase 2A1 from Rattus norvegicus (Rat).